The primary structure comprises 432 residues: Selenocysteine lyase (432 aa).

Residue Met1 is modified to N-acetylmethionine. A disordered region spans residues 1–20; it reads MDVARNGARGSVESPPNRKV. Ser117 carries the post-translational modification Phosphoserine. At Lys247 the chain carries N6-(pyridoxal phosphate)lysine. Residue Cys375 is the S-selanylcysteine intermediate of the active site.

The protein belongs to the class-V pyridoxal-phosphate-dependent aminotransferase family. In terms of assembly, homodimer. Pyridoxal 5'-phosphate serves as cofactor.

It localises to the cytoplasm. It is found in the cytosol. The enzyme catalyses L-selenocysteine + AH2 = hydrogenselenide + L-alanine + A + H(+). In terms of biological role, catalyzes the decomposition of L-selenocysteine to L-alanine and elemental selenium. In Rattus norvegicus (Rat), this protein is Selenocysteine lyase (Scly).